Reading from the N-terminus, the 131-residue chain is UPF0146 protein PYRAB01940 (131 aa).

Belongs to the UPF0146 family.

The chain is UPF0146 protein PYRAB01940 from Pyrococcus abyssi (strain GE5 / Orsay).